Consider the following 613-residue polypeptide: Portal protein (613 aa).

The interval 577-613 (ATGGDHGIRQAPSARGDAEPDHAKSKPARDPPPGAGS) is disordered. A compositionally biased stretch (basic and acidic residues) spans 592-605 (GDAEPDHAKSKPAR).

Belongs to the herpesviridae portal protein family. Homododecamerizes. Interacts with terminase subunits TRM1 and TRM3.

Its subcellular location is the virion. The protein localises to the host nucleus. In terms of biological role, forms a portal in the viral capsid through which viral DNA is translocated during DNA packaging. Assembles as a dodecamer at a single fivefold axe of the T=16 icosahedric capsid. Binds to the molecular motor that translocates the viral DNA, termed terminase. This is Portal protein from Homo sapiens (Human).